The following is a 462-amino-acid chain: ATP synthase subunit beta (462 aa).

An ATP-binding site is contributed by 149-156; sequence GGAGVGKT.

Belongs to the ATPase alpha/beta chains family. As to quaternary structure, F-type ATPases have 2 components, CF(1) - the catalytic core - and CF(0) - the membrane proton channel. CF(1) has five subunits: alpha(3), beta(3), gamma(1), delta(1), epsilon(1). CF(0) has three main subunits: a(1), b(2) and c(9-12). The alpha and beta chains form an alternating ring which encloses part of the gamma chain. CF(1) is attached to CF(0) by a central stalk formed by the gamma and epsilon chains, while a peripheral stalk is formed by the delta and b chains.

It is found in the cell inner membrane. It carries out the reaction ATP + H2O + 4 H(+)(in) = ADP + phosphate + 5 H(+)(out). In terms of biological role, produces ATP from ADP in the presence of a proton gradient across the membrane. The catalytic sites are hosted primarily by the beta subunits. This is ATP synthase subunit beta from Fusobacterium nucleatum subsp. nucleatum (strain ATCC 25586 / DSM 15643 / BCRC 10681 / CIP 101130 / JCM 8532 / KCTC 2640 / LMG 13131 / VPI 4355).